Reading from the N-terminus, the 647-residue chain is Neuronal PAS domain-containing protein 4-like (647 aa).

Residues 16-29 (KRFRSTKGASKARR) form a basic motif; degenerate region. One can recognise a bHLH domain in the interval 16-67 (KRFRSTKGASKARRDQMNSEIRNLRALLPISPEHRLSYLHSMSITCTYIRKS). The tract at residues 30 to 67 (DQMNSEIRNLRALLPISPEHRLSYLHSMSITCTYIRKS) is helix-loop-helix motif. PAS domains follow at residues 117–181 (VLQA…SPSG) and 238–274 (SADMRLASASSSVLFHLGFSADELIGRSWYELLHPDD).

In terms of assembly, heterodimer; efficient DNA binding requires dimerization with another bHLH protein. As to expression, specifically expressed in endothelial and hematopoietic precursor cells.

It localises to the nucleus. Transcription factor specifically expressed in endothelial and hematopoietic precursor cells that acts as a key regulator of the endothelial differentiation cascade. Acts as an early-response transcription factor that regulates the expression of early regulators of endothelial and haematopoietic differentiation, such as etv2 and tal1. The polypeptide is Neuronal PAS domain-containing protein 4-like (Danio rerio (Zebrafish)).